Consider the following 632-residue polypeptide: Phosphatidylinositol-3,5-bisphosphate 3-phosphatase MTMR8 (632 aa).

One can recognise a Myotubularin phosphatase domain in the interval 126–500 (GWELISVVND…LHFKFWCGMY (375 aa)). Residues N250, N275, and I276 each contribute to the a 1,2-diacyl-sn-glycero-3-phospho-(1D-myo-inositol-3,5-bisphosphate) site. A 1,2-diacyl-sn-glycero-3-phospho-(1D-myo-inositol-3-phosphate)-binding residues include N250, N275, and I276. C338 serves as the catalytic Phosphocysteine intermediate. Residues S339, D340, G341, W342, D343, R344, K380, and R384 each coordinate a 1,2-diacyl-sn-glycero-3-phospho-(1D-myo-inositol-3,5-bisphosphate). 6 residues coordinate a 1,2-diacyl-sn-glycero-3-phospho-(1D-myo-inositol-3-phosphate): S339, D340, G341, W342, D343, and R344. Phosphate contacts are provided by S339 and D340. Positions 342, 343, and 344 each coordinate phosphate. Residue R384 participates in a 1,2-diacyl-sn-glycero-3-phospho-(1D-myo-inositol-3-phosphate) binding. Residues 545-632 (LPDPAGPINT…HSKEEVQESS (88 aa)) form a disordered region. Basic and acidic residues predominate over residues 602-632 (EPAANEHDLSSKDKPVFVETEHSKEEVQESS).

Belongs to the protein-tyrosine phosphatase family. Non-receptor class myotubularin subfamily. In terms of assembly, homodimer.

It is found in the nucleus envelope. It carries out the reaction a 1,2-diacyl-sn-glycero-3-phospho-(1D-myo-inositol-3,5-bisphosphate) + H2O = a 1,2-diacyl-sn-glycero-3-phospho-(1D-myo-inositol-5-phosphate) + phosphate. It catalyses the reaction a 1,2-diacyl-sn-glycero-3-phospho-(1D-myo-inositol-3-phosphate) + H2O = a 1,2-diacyl-sn-glycero-3-phospho-(1D-myo-inositol) + phosphate. The catalysed reaction is 1,2-dioctanoyl-sn-glycero-3-phospho-(1D-myo-inositol-3,5-bisphosphate) + H2O = 1,2-dioctanoyl-sn-glycero-3-phospho-(1D-myo-inositol-5-phosphate) + phosphate. Lipid phosphatase that specifically dephosphorylates the D-3 position of phosphatidylinositol 3-phosphate and phosphatidylinositol 3,5-bisphosphate, generating phosphatidylinositol and phosphatidylinositol 5-phosphate. The sequence is that of Phosphatidylinositol-3,5-bisphosphate 3-phosphatase MTMR8 (mtmr8) from Danio rerio (Zebrafish).